We begin with the raw amino-acid sequence, 303 residues long: tRNA dimethylallyltransferase (303 aa).

G9–T16 serves as a coordination point for ATP. T11–T16 contributes to the substrate binding site. Positions D34–Q37 are interaction with substrate tRNA.

The protein belongs to the IPP transferase family. Monomer. Mg(2+) is required as a cofactor.

It carries out the reaction adenosine(37) in tRNA + dimethylallyl diphosphate = N(6)-dimethylallyladenosine(37) in tRNA + diphosphate. Functionally, catalyzes the transfer of a dimethylallyl group onto the adenine at position 37 in tRNAs that read codons beginning with uridine, leading to the formation of N6-(dimethylallyl)adenosine (i(6)A). The sequence is that of tRNA dimethylallyltransferase from Petrotoga mobilis (strain DSM 10674 / SJ95).